The primary structure comprises 537 residues: Mitochondrial distribution and morphology protein 34 (537 aa).

The SMP-LTD domain occupies 1 to 195 (MAFNFNWSPL…LPAIIHRLSL (195 aa)). Disordered regions lie at residues 320–339 (YTFS…RPSL), 348–403 (GLSL…IMPH), 421–493 (GRSP…DTSS), and 516–537 (KNGN…YEAR). Residues 355–371 (RHSKAGRKKKTRVVNLR) are compositionally biased toward basic residues. Residues 378-391 (ANSEEEEDTPETDS) show a composition bias toward acidic residues. Positions 425–441 (DLQQQPRRPSFRAQATN) are enriched in polar residues.

It belongs to the MDM34 family. In terms of assembly, component of the ER-mitochondria encounter structure (ERMES) or MDM complex, composed of MMM1, MDM10, MDM12 and MDM34.

The protein resides in the mitochondrion outer membrane. In terms of biological role, component of the ERMES/MDM complex, which serves as a molecular tether to connect the endoplasmic reticulum (ER) and mitochondria. Components of this complex are involved in the control of mitochondrial shape and protein biogenesis, and function in nonvesicular lipid trafficking between the ER and mitochondria. MDM34 is required for the interaction of the ER-resident membrane protein MMM1 and the outer mitochondrial membrane-resident beta-barrel protein MDM10. The protein is Mitochondrial distribution and morphology protein 34 of Chaetomium globosum (strain ATCC 6205 / CBS 148.51 / DSM 1962 / NBRC 6347 / NRRL 1970) (Soil fungus).